We begin with the raw amino-acid sequence, 1754 residues long: Probable outer membrane protein PmpB (1754 aa).

Positions 1–14 (MSSMKWLSATAVFA) are cleaved as a signal peptide. Low complexity-rich tracts occupy residues 68-105 (NIPTTDTTTPTNSNSSSSNGETASVSEDSDSTTTTPDP) and 212-232 (SETSGSSSSSGNDSVSSPSSS). Disordered stretches follow at residues 68-109 (NIPT…KGGG), 190-235 (SSNS…SRAE), 252-271 (PAAQTDTETSTPSHKPGSGG), 397-438 (NADA…ATAK), 621-668 (AAEN…STPS), and 1299-1332 (TSSASGGSGVSSSIPTNPKRISAAAPSGSAATTP). 2 stretches are compositionally biased toward polar residues: residues 252–264 (PAAQTDTETSTPS) and 402–412 (ASSSPQSGSGA). Composition is skewed to low complexity over residues 413–427 (TTVSNSGDSSSGSDS), 636–668 (PTADTAEQPAAASAATSTPESAPVVSTALSTPS), 1299–1311 (TSSASGGSGVSSS), and 1320–1332 (SAAAPSGSAATTP). The Autotransporter domain maps to 1461-1754 (DDIAYNNFWV…MTSCGARMIF (294 aa)).

It belongs to the PMP outer membrane protein family.

The protein localises to the secreted. Its subcellular location is the cell wall. The protein resides in the cell outer membrane. The polypeptide is Probable outer membrane protein PmpB (pmpB) (Chlamydia trachomatis serovar D (strain ATCC VR-885 / DSM 19411 / UW-3/Cx)).